A 388-amino-acid chain; its full sequence is MARQDYVFTSESVSEGHPDKLCDQISDAVLDALLAEDPAARVACEAFATTGTVVIGGEIGLSDKKKLGEYMGRIAEIARNTIRDIGYEQEKFHWNTCHVHNYLHEQSAHISQGVDRDGAGDQGIMFGYAVDETPELMPAPIQYAHAILRRLAEARKSGAEPTLGPDAKSQLSLRYENGKPVEITSLVLSHQHKDESQTSDDIRAIVEPYIREVLPAEWLTERTEWWVNPTGTFVIGGPDGDAGLTGRKIIVDTYGGAAPHGGGAFSGKDPTKVDRSAAYAARYLAKNVVAAGLAKRCVIQLSYAIGVAKPLSIYADTFGTSEVPEAEIERAVSRAMDLTPRGIREHLALCRPIYRRTAAYGHFGRAPDADGGFSWERTDLVEAIKREL.

His17 contributes to the ATP binding site. Position 19 (Asp19) interacts with Mg(2+). Glu45 is a binding site for K(+). L-methionine-binding residues include Glu58 and Gln106. Positions 106 to 116 are flexible loop; sequence QSAHISQGVDR. Residues 166–168, Asp241, 247–248, Ala264, and Lys268 contribute to the ATP site; these read DAK and RK. An L-methionine-binding site is contributed by Asp241. L-methionine is bound at residue Lys272.

The protein belongs to the AdoMet synthase family. In terms of assembly, homotetramer; dimer of dimers. Requires Mg(2+) as cofactor. K(+) is required as a cofactor.

It is found in the cytoplasm. It catalyses the reaction L-methionine + ATP + H2O = S-adenosyl-L-methionine + phosphate + diphosphate. It participates in amino-acid biosynthesis; S-adenosyl-L-methionine biosynthesis; S-adenosyl-L-methionine from L-methionine: step 1/1. Functionally, catalyzes the formation of S-adenosylmethionine (AdoMet) from methionine and ATP. The overall synthetic reaction is composed of two sequential steps, AdoMet formation and the subsequent tripolyphosphate hydrolysis which occurs prior to release of AdoMet from the enzyme. In Paracoccus denitrificans (strain Pd 1222), this protein is S-adenosylmethionine synthase.